The sequence spans 304 residues: Aspartate carbamoyltransferase catalytic subunit (304 aa).

The carbamoyl phosphate site is built by R53 and T54. K82 serves as a coordination point for L-aspartate. Carbamoyl phosphate-binding residues include R103, H131, and Q134. L-aspartate-binding residues include R163 and R224. Residues L263 and P264 each contribute to the carbamoyl phosphate site.

This sequence belongs to the aspartate/ornithine carbamoyltransferase superfamily. ATCase family. Heterooligomer of catalytic and regulatory chains.

The enzyme catalyses carbamoyl phosphate + L-aspartate = N-carbamoyl-L-aspartate + phosphate + H(+). It functions in the pathway pyrimidine metabolism; UMP biosynthesis via de novo pathway; (S)-dihydroorotate from bicarbonate: step 2/3. Functionally, catalyzes the condensation of carbamoyl phosphate and aspartate to form carbamoyl aspartate and inorganic phosphate, the committed step in the de novo pyrimidine nucleotide biosynthesis pathway. The protein is Aspartate carbamoyltransferase catalytic subunit of Haloarcula marismortui (strain ATCC 43049 / DSM 3752 / JCM 8966 / VKM B-1809) (Halobacterium marismortui).